We begin with the raw amino-acid sequence, 209 residues long: Large ribosomal subunit protein uL3 (209 aa).

This sequence belongs to the universal ribosomal protein uL3 family. As to quaternary structure, part of the 50S ribosomal subunit. Forms a cluster with proteins L14 and L19.

Functionally, one of the primary rRNA binding proteins, it binds directly near the 3'-end of the 23S rRNA, where it nucleates assembly of the 50S subunit. This is Large ribosomal subunit protein uL3 from Moorella thermoacetica (strain ATCC 39073 / JCM 9320).